Reading from the N-terminus, the 442-residue chain is 3-phosphoshikimate 1-carboxyvinyltransferase (442 aa).

3 residues coordinate 3-phosphoshikimate: lysine 27, serine 28, and arginine 32. Residue lysine 27 participates in phosphoenolpyruvate binding. Residues glycine 100 and arginine 128 each contribute to the phosphoenolpyruvate site. 3-phosphoshikimate contacts are provided by serine 174, serine 175, glutamine 176, serine 204, aspartate 321, and lysine 348. Glutamine 176 serves as a coordination point for phosphoenolpyruvate. Aspartate 321 (proton acceptor) is an active-site residue. Phosphoenolpyruvate is bound by residues arginine 352, arginine 394, and lysine 424.

This sequence belongs to the EPSP synthase family. In terms of assembly, monomer.

It is found in the cytoplasm. It carries out the reaction 3-phosphoshikimate + phosphoenolpyruvate = 5-O-(1-carboxyvinyl)-3-phosphoshikimate + phosphate. The protein operates within metabolic intermediate biosynthesis; chorismate biosynthesis; chorismate from D-erythrose 4-phosphate and phosphoenolpyruvate: step 6/7. Its function is as follows. Catalyzes the transfer of the enolpyruvyl moiety of phosphoenolpyruvate (PEP) to the 5-hydroxyl of shikimate-3-phosphate (S3P) to produce enolpyruvyl shikimate-3-phosphate and inorganic phosphate. The protein is 3-phosphoshikimate 1-carboxyvinyltransferase of Herminiimonas arsenicoxydans.